A 315-amino-acid polypeptide reads, in one-letter code: Aspartate carbamoyltransferase catalytic subunit (315 aa).

Carbamoyl phosphate-binding residues include Arg65 and Thr66. Lys93 contributes to the L-aspartate binding site. Carbamoyl phosphate-binding residues include Arg115, His145, and Gln148. L-aspartate contacts are provided by Arg179 and Arg234. Carbamoyl phosphate-binding residues include Gly275 and Pro276.

Belongs to the aspartate/ornithine carbamoyltransferase superfamily. ATCase family. Heterododecamer (2C3:3R2) of six catalytic PyrB chains organized as two trimers (C3), and six regulatory PyrI chains organized as three dimers (R2).

The catalysed reaction is carbamoyl phosphate + L-aspartate = N-carbamoyl-L-aspartate + phosphate + H(+). Its pathway is pyrimidine metabolism; UMP biosynthesis via de novo pathway; (S)-dihydroorotate from bicarbonate: step 2/3. In terms of biological role, catalyzes the condensation of carbamoyl phosphate and aspartate to form carbamoyl aspartate and inorganic phosphate, the committed step in the de novo pyrimidine nucleotide biosynthesis pathway. This chain is Aspartate carbamoyltransferase catalytic subunit, found in Xanthomonas axonopodis pv. citri (strain 306).